The primary structure comprises 771 residues: Solute carrier family 7 member 14 (771 aa).

The next 6 helical transmembrane spans lie at 58–78, 83–103, 119–141, 187–207, 216–236, and 251–271; these read LISL…SGLV, AGPG…LSGV, AYTY…NLIL, YPDL…ALGV, VLNV…LFFI, and WSGV…FDII. N-linked (GlcNAc...) asparagine glycosylation is present at N282. 5 helical membrane passes run 291–311, 336–356, 360–380, 384–404, and 407–427; these read ASLV…TLMV, FVVA…SLFP, VIYA…VSSY, PVVA…LVSL, and LIEM…VCVL. Residues S465, S468, and S488 each carry the phosphoserine modification. The next 4 helical transmembrane spans lie at 565 to 585, 596 to 616, 628 to 648, and 655 to 675; these read VTIC…FIIF, WAIL…FVIL, MAPC…YLML, and WIRF…YGIW. N676 is a glycosylation site (N-linked (GlcNAc...) asparagine). The interval 736-771 is disordered; that stretch reads DAKANGRTSSKAKSKSKHKQNSEALIANDELDYSPE. Residues 745–754 are compositionally biased toward basic residues; it reads SKAKSKSKHK. S757 and S769 each carry phosphoserine.

This sequence belongs to the amino acid-polyamine-organocation (APC) superfamily. Cationic amino acid transporter (CAT) (TC 2.A.3.3) family. In terms of tissue distribution, expressed in skin fibroblasts.

The protein localises to the lysosome membrane. The enzyme catalyses 4-aminobutanoate(in) = 4-aminobutanoate(out). Functionally, imports 4-aminobutanoate (GABA) into lysosomes. May act as a GABA sensor that regulates mTORC2-dependent INS signaling and gluconeogenesis. The transport mechanism and substrate selectivity remain to be elucidated. This is Solute carrier family 7 member 14 from Homo sapiens (Human).